The sequence spans 636 residues: Chaperone protein HtpG (636 aa).

The segment at 1-349 is a; substrate-binding; it reads MAKHQFQTEV…SEDLPLNVSR (349 aa). Residues 350–562 form a b region; the sequence is EILQENRILA…ADAQMAAMAH (213 aa). The interval 563–636 is c; the sequence is MFRAMGQAMP…RLSRITAKAL (74 aa).

This sequence belongs to the heat shock protein 90 family. As to quaternary structure, homodimer.

It localises to the cytoplasm. In terms of biological role, molecular chaperone. Has ATPase activity. The sequence is that of Chaperone protein HtpG from Aliarcobacter butzleri (strain RM4018) (Arcobacter butzleri).